A 360-amino-acid chain; its full sequence is Phenylalanine--tRNA ligase alpha subunit (360 aa).

Residue glutamate 260 participates in Mg(2+) binding.

This sequence belongs to the class-II aminoacyl-tRNA synthetase family. Phe-tRNA synthetase alpha subunit type 1 subfamily. In terms of assembly, tetramer of two alpha and two beta subunits. Mg(2+) serves as cofactor.

The protein resides in the cytoplasm. The enzyme catalyses tRNA(Phe) + L-phenylalanine + ATP = L-phenylalanyl-tRNA(Phe) + AMP + diphosphate + H(+). The chain is Phenylalanine--tRNA ligase alpha subunit from Methylocella silvestris (strain DSM 15510 / CIP 108128 / LMG 27833 / NCIMB 13906 / BL2).